We begin with the raw amino-acid sequence, 398 residues long: Calreticulin (398 aa).

The signal sequence occupies residues 1-19 (MKAVVLVVVSLLALSSINC). An N-domain region spans residues 20–197 (DVFFEEKFPD…NEKVESGDLE (178 aa)). Cys105 and Cys137 are oxidised to a cystine. An alpha-D-glucoside is bound by residues Tyr109, Lys111, Tyr128, and Asp135. A run of 7 repeats spans residues 191-202 (VESGDLEADWDF), 210-221 (DPEAKKPEDWDD), 227-238 (DPEDKKPEDWDK), 244-255 (DPDATKPEDWDD), 259-269 (GEWEPPMIDNP), 273-283 (GVWAPKQIDNP), and 287-297 (GPWVHPEIDNP). Positions 191–255 (VESGDLEADW…DATKPEDWDD (65 aa)) are 4 X approximate repeats. A P-domain region spans residues 198-308 (ADWDFLPNKK…YTPDSNLYKR (111 aa)). Residues 207–251 (KIKDPEAKKPEDWDDKPTIPDPEDKKPEDWDKPEHIPDPDATKPE) are compositionally biased toward basic and acidic residues. Residues 207–257 (KIKDPEAKKPEDWDDKPTIPDPEDKKPEDWDKPEHIPDPDATKPEDWDDEM) are disordered. The interval 259-297 (GEWEPPMIDNPDYKGVWAPKQIDNPAYKGPWVHPEIDNP) is 3 X approximate repeats. The C-domain stretch occupies residues 309-398 (DEICAVGLDL…AAPVEEHDEL (90 aa)). An an alpha-D-glucoside-binding site is contributed by Asp317. A disordered region spans residues 334–398 (DDPAAAKERG…AAPVEEHDEL (65 aa)). A compositionally biased stretch (basic and acidic residues) spans 337–372 (AAAKERGEVIKKRQEGEKKMKSEQDEAEREKEKAEK). The span at 373 to 387 (PDDEEDDEDLDDETG) shows a compositional bias: acidic residues. The Prevents secretion from ER signature appears at 395-398 (HDEL).

This sequence belongs to the calreticulin family. As to quaternary structure, monomer. As to expression, expressed in fat bodies. Not expressed in midgut, silk gland, ovary or testis.

It is found in the endoplasmic reticulum lumen. Its function is as follows. Molecular calcium-binding chaperone promoting folding, oligomeric assembly and quality control in the ER via the calreticulin/calnexin cycle. This lectin may interact transiently with almost all of the monoglucosylated glycoproteins that are synthesized in the ER. This Bombyx mori (Silk moth) protein is Calreticulin.